The following is a 414-amino-acid chain: DNA primase small subunit PriS (414 aa).

Catalysis depends on residues D98, D100, and D312.

It belongs to the eukaryotic-type primase small subunit family. Heterodimer of a small subunit (PriS) and a large subunit (PriL). Mg(2+) serves as cofactor. It depends on Mn(2+) as a cofactor.

Catalytic subunit of DNA primase, an RNA polymerase that catalyzes the synthesis of short RNA molecules used as primers for DNA polymerase during DNA replication. The small subunit contains the primase catalytic core and has DNA synthesis activity on its own. Binding to the large subunit stabilizes and modulates the activity, increasing the rate of DNA synthesis while decreasing the length of the DNA fragments, and conferring RNA synthesis capability. The DNA polymerase activity may enable DNA primase to also catalyze primer extension after primer synthesis. May also play a role in DNA repair. This Methanosarcina barkeri (strain Fusaro / DSM 804) protein is DNA primase small subunit PriS.